The following is a 759-amino-acid chain: Zinc finger protein 287 (759 aa).

An SCAN box domain is found at 42–124 (RRNFRNFPYP…ALVEDLTQIL (83 aa)). A disordered region spans residues 127-154 (EEAPQSSALPQDTPEDDPNHDPNPASQA). The 69-residue stretch at 166 to 234 (VTFNDVAVDI…IKEIVEGPNP (69 aa)) folds into the KRAB domain. 14 C2H2-type zinc fingers span residues 366 to 388 (YSCN…RENH), 394 to 416 (YECE…QRMH), 422 to 444 (YECH…QRIH), 450 to 472 (YKCE…QRTH), 478 to 500 (YKCL…QRVH), 506 to 528 (YICN…QKIH), 534 to 556 (YKCN…QRIH), 562 to 584 (YKCT…QTTH), 590 to 612 (YICN…HRTH), 618 to 640 (YKCS…QRIH), 646 to 668 (FKCN…QRVH), 674 to 696 (YKCH…RRTH), 702 to 724 (YKCS…QRIH), and 730 to 752 (YGCR…QRVH).

This sequence belongs to the krueppel C2H2-type zinc-finger protein family. In terms of tissue distribution, expressed in brain and at low levels in kidney and spleen and few hematopoietic cell lines.

Its subcellular location is the nucleus. Its function is as follows. May be involved in transcriptional regulation. In Mus musculus (Mouse), this protein is Zinc finger protein 287.